The sequence spans 111 residues: Class I hydrophobin 2 (111 aa).

Residues 1–21 (MFSRVMFCTFLILPLLAAATA) form the signal peptide. Disulfide bonds link Cys30–Cys90, Cys37–Cys84, Cys38–Cys71, and Cys91–Cys104.

It belongs to the fungal hydrophobin family. In terms of assembly, self-assembles to form functional amyloid fibrils called rodlets. Self-assembly into fibrillar rodlets occurs spontaneously at hydrophobic:hydrophilic interfaces and the rodlets further associate laterally to form amphipathic monolayers. Behavior depends on environmental conditions: (1) when the pH increases or in the presence of Ca(2+) ions, an assembled state, beta-sheet rich, is formed; (2) when the solvent polarity increases, the vhm2 shows an increased tendency to reach hydrophobic/hydrophilic interfaces, with no detectable conformational change; and (3) at high temperature, a reversible conformational change and reversible aggregation occur. The physical and chemical properties, both in solution and as a biofilm, are affected by polysaccharides that act as hydrophilic stabilizer.

The protein localises to the secreted. Its subcellular location is the cell wall. Its function is as follows. Aerial growth, conidiation, and dispersal of filamentous fungi in the environment rely upon a capability of their secreting small amphipathic proteins called hydrophobins (HPBs) with low sequence identity. Class I can self-assemble into an outermost layer of rodlet bundles on aerial cell surfaces, conferring cellular hydrophobicity that supports fungal growth, development and dispersal; whereas Class II form highly ordered films at water-air interfaces through intermolecular interactions but contribute nothing to the rodlet structure. Vmh2 is a class I hydrophobin involved in biofilm formation and is essential for the maintenance of the surface hydrophobicity of the mycelium. Seems not to be involved in hyphal resistance against environmental stress. The polypeptide is Class I hydrophobin 2 (Pleurotus ostreatus (strain PC15) (Oyster mushroom)).